Here is a 298-residue protein sequence, read N- to C-terminus: Anamorsin homolog (298 aa).

The segment at 1 to 143 is N-terminal SAM-like domain; it reads MTQLIITHQS…IKAEKPSWKP (143 aa). Positions 143–162 are linker; sequence PEEGKVLVDDIDLEGSVPDI. Residues Cys-175, Cys-182, Cys-185, and Cys-187 each coordinate [2Fe-2S] cluster. The fe-S binding site A stretch occupies residues 175-187; that stretch reads CKSKERACNNCNC. Residues Cys-218, Cys-221, Cys-229, and Cys-232 each contribute to the [4Fe-4S] cluster site. 2 short sequence motifs (cx2C motif) span residues 218–221 and 229–232; these read CGNC and CSGC. Residues 218–232 are fe-S binding site B; sequence CGNCYLGDAFRCSGC.

This sequence belongs to the anamorsin family. As to quaternary structure, monomer. It depends on [2Fe-2S] cluster as a cofactor. [4Fe-4S] cluster serves as cofactor.

Its subcellular location is the cytoplasm. It localises to the mitochondrion intermembrane space. In terms of biological role, component of the cytosolic iron-sulfur (Fe-S) protein assembly (CIA) machinery. Required for the maturation of extramitochondrial Fe-S proteins. Part of an electron transfer chain functioning in an early step of cytosolic Fe-S biogenesis, facilitating the de novo assembly of a [4Fe-4S] cluster on the cytosolic Fe-S scaffold complex. Electrons are transferred from NADPH via a FAD- and FMN-containing diflavin oxidoreductase. Together with the diflavin oxidoreductase, also required for the assembly of the diferric tyrosyl radical cofactor of ribonucleotide reductase (RNR), probably by providing electrons for reduction during radical cofactor maturation in the catalytic small subunit. This is Anamorsin homolog from Cryptosporidium parvum (strain Iowa II).